A 303-amino-acid chain; its full sequence is MASWAKGRSYLAPGLLQGQVAIVTGGATGIGKAIVKELLELGSNVVIASRKLERLKSAAGELQANLPPTKQARVIPIQCNIRNEEEVNNLVKSTLDIFGKINFLVNNGGGQFLSLAEHISSKGWHAVLETNLTGTFYMCKAVYSSWMKEHGGSIVNIIVSIKTGLPLAVHSGAARAGVYNLTKSLALEWACSGVRINCVAPGVIYSQTAVENYGSYGQSFFEESFQKIPAKRIGVPEEVSSVVCFLLSPAASFITGQSVDVDGGRSLYTHSYEIPDHDNWPKGAGDLSVVKRMKETFKEKAKL.

23–47 (VTGGATGIGKAIVKELLELGSNVVI) is a binding site for NADP(+). N6-succinyllysine is present on Lys-32. Phosphoserine is present on Ser-49. Catalysis depends on Tyr-179, which acts as the Proton acceptor. A Phosphotyrosine modification is found at Tyr-179. The short motif at 301–303 (AKL) is the Microbody targeting signal element.

It belongs to the short-chain dehydrogenases/reductases (SDR) family. In terms of assembly, interacts with PEX5, probably required to target it into peroxisomes.

It localises to the peroxisome. The catalysed reaction is a (2E)-enoyl-CoA + NADPH + H(+) = a 2,3-saturated acyl-CoA + NADP(+). It catalyses the reaction (2E)-hexenoyl-CoA + NADPH + H(+) = hexanoyl-CoA + NADP(+). The enzyme catalyses (2E)-octenoyl-CoA + NADPH + H(+) = octanoyl-CoA + NADP(+). It carries out the reaction (2E)-decenoyl-CoA + NADPH + H(+) = decanoyl-CoA + NADP(+). The catalysed reaction is (2E)-dodecenoyl-CoA + NADPH + H(+) = dodecanoyl-CoA + NADP(+). It catalyses the reaction (2E)-tetradecenoyl-CoA + NADPH + H(+) = tetradecanoyl-CoA + NADP(+). Its pathway is lipid metabolism; fatty acid biosynthesis. Its function is as follows. Participates in chain elongation of fatty acids. Catalyzes the reduction of trans-2-enoyl-CoAs of varying chain lengths from 6:1 to 16:1, having maximum activity with 10:1 CoA. Has no 2,4-dienoyl-CoA reductase activity. The protein is Peroxisomal trans-2-enoyl-CoA reductase (PECR) of Pongo abelii (Sumatran orangutan).